The chain runs to 259 residues: MTDNNDTWTVAGRTFTSRLIVGTGKYKDFEQNAAAVEASGAEIVTVAVRRVNVSDPKAPMLTDYIDPKKITYLPNTAGCFTAEDAIRTLRLAREAGGWDLVKLEVLGEARTLYPNMIETIRATEVLAKEGFLPMVYCVDDPIAAKQLEDAGAVAVMPLGAPIGSGLGIQNKVTVRLIVEGAKVPVLVDAGVGTASEAAVAMELGCDGVLMNTAIAEAKDPIRMARAMKLAVQAGRDAYLAGRMPTRKYADPSSPLAGLI.

Catalysis depends on Lys-102, which acts as the Schiff-base intermediate with DXP. Residues Gly-163, 189–190 (AG), and 211–212 (NT) each bind 1-deoxy-D-xylulose 5-phosphate.

It belongs to the ThiG family. As to quaternary structure, homotetramer. Forms heterodimers with either ThiH or ThiS.

It localises to the cytoplasm. The catalysed reaction is [ThiS sulfur-carrier protein]-C-terminal-Gly-aminoethanethioate + 2-iminoacetate + 1-deoxy-D-xylulose 5-phosphate = [ThiS sulfur-carrier protein]-C-terminal Gly-Gly + 2-[(2R,5Z)-2-carboxy-4-methylthiazol-5(2H)-ylidene]ethyl phosphate + 2 H2O + H(+). It functions in the pathway cofactor biosynthesis; thiamine diphosphate biosynthesis. Catalyzes the rearrangement of 1-deoxy-D-xylulose 5-phosphate (DXP) to produce the thiazole phosphate moiety of thiamine. Sulfur is provided by the thiocarboxylate moiety of the carrier protein ThiS. In vitro, sulfur can be provided by H(2)S. This is Thiazole synthase from Novosphingobium aromaticivorans (strain ATCC 700278 / DSM 12444 / CCUG 56034 / CIP 105152 / NBRC 16084 / F199).